The following is a 451-amino-acid chain: UDP-N-acetylmuramoylalanine--D-glutamate ligase (451 aa).

119 to 125 (GSNGKTT) provides a ligand contact to ATP.

It belongs to the MurCDEF family.

The protein resides in the cytoplasm. It carries out the reaction UDP-N-acetyl-alpha-D-muramoyl-L-alanine + D-glutamate + ATP = UDP-N-acetyl-alpha-D-muramoyl-L-alanyl-D-glutamate + ADP + phosphate + H(+). It participates in cell wall biogenesis; peptidoglycan biosynthesis. In terms of biological role, cell wall formation. Catalyzes the addition of glutamate to the nucleotide precursor UDP-N-acetylmuramoyl-L-alanine (UMA). The polypeptide is UDP-N-acetylmuramoylalanine--D-glutamate ligase (Streptococcus agalactiae serotype Ia (strain ATCC 27591 / A909 / CDC SS700)).